The following is a 651-amino-acid chain: Protein numb homolog (651 aa).

The PID domain maps to 33–193; that stretch reads RTGKCSFPVK…ASRTTFTREG (161 aa). Position 102 is a phosphothreonine; by AAK1 (threonine 102). Position 194 is a phosphoserine (serine 194). Positions 228-255 are disordered; it reads SSVAPGNTAPSPSSPTSPTSDATTSLEM. The span at 235–252 shows a compositional bias: low complexity; sequence TAPSPSSPTSPTSDATTS. Threonine 243 bears the Phosphothreonine mark. The residue at position 244 (serine 244) is a Phosphoserine. Phosphoserine; by CaMK1 is present on residues serine 276 and serine 295. Disordered stretches follow at residues 419-483 and 623-651; these read QSSG…SPFQ and LENK…EIEL. Serine 425 is subject to Phosphoserine. A Phosphothreonine modification is found at threonine 436. Over residues 436-449 the composition is skewed to basic and acidic residues; sequence TPSEADRWLEEVSK. Serine 438 carries the post-translational modification Phosphoserine. A compositionally biased stretch (low complexity) spans 453-466; it reads AQQPQASAAPLQPV. Positions 630–644 are enriched in polar residues; it reads RTNPSPTNPFSSDLQ. Serine 634 is subject to Phosphoserine.

In terms of assembly, interacts with SIAH1. Interacts with LNX. Interacts with CDH1. Interacts with TFAP2A and TFAP2B. Interacts with RALBP1 in a complex also containing EPN1 and TFAP2A during interphase and mitosis. Interacts with AAK1. May interact with DUOXA1. Post-translationally, phosphorylated on Ser-276 and Ser-295 by CaMK1. In terms of processing, isoform 1 and isoform 2 are ubiquitinated by LNX leading to their subsequent proteasomal degradation. Ubiquitinated; mediated by SIAH1 and leading to its subsequent proteasomal degradation.

The protein localises to the cell membrane. It localises to the endosome membrane. Its function is as follows. Regulates clathrin-mediated receptor endocytosis. Plays a role in the process of neurogenesis. Required throughout embryonic neurogenesis to maintain neural progenitor cells, also called radial glial cells (RGCs), by allowing their daughter cells to choose progenitor over neuronal cell fate. Not required for the proliferation of neural progenitor cells before the onset of neurogenesis. Also involved postnatally in the subventricular zone (SVZ) neurogenesis by regulating SVZ neuroblasts survival and ependymal wall integrity. May also mediate local repair of brain ventricular wall damage. The sequence is that of Protein numb homolog from Homo sapiens (Human).